A 494-amino-acid polypeptide reads, in one-letter code: Inositol-trisphosphate 3-kinase homolog (494 aa).

ATP is bound by residues S206, K218, 260 to 262, and D276; that span reads EDL. Residues K278 and 322 to 329 each bind substrate; that span reads KLRYMQFR. Positions 346 and 426 each coordinate ATP. Position 429 (K429) interacts with substrate.

Belongs to the inositol phosphokinase (IPK) family. As to expression, expressed in spermatheca.

The enzyme catalyses 1D-myo-inositol 1,4,5-trisphosphate + ATP = 1D-myo-inositol 1,3,4,5-tetrakisphosphate + ADP + H(+). Unlike mammalian IP3K, may not be regulated by calmodulin. Its function is as follows. Probably by regulating inositol 1,4,5-trisphosphate levels, negatively regulates posterior body wall muscle contractions required for defecation and let-23 signaling pathway that controls spermathecal dilation and ovulation. May also regulate ovulation downstream of actin cross-linker fln-1. The polypeptide is Inositol-trisphosphate 3-kinase homolog (Caenorhabditis elegans).